The sequence spans 420 residues: Probable secreted beta-glucosidase SUN4 (420 aa).

The first 24 residues, 1–24, serve as a signal peptide directing secretion; sequence MKLSATTLTAASLIGYSTIVSALP. The tract at residues 89 to 145 is disordered; the sequence is TKSSSKVASSSESTEQIATTSSSAQTTLTSSETSTSESSVPISTSGSASTSSAASSA. N-linked (GlcNAc...) asparagine glycosylation is present at N395.

This sequence belongs to the SUN family. In terms of processing, glycosylated.

Its subcellular location is the secreted. The protein resides in the cell wall. Its function is as follows. Involved in the remodeling of the cell wall during the various phases of yeast culture development and under various environmental conditions and plays a role in septation. The sequence is that of Probable secreted beta-glucosidase SUN4 (SUN4) from Saccharomyces cerevisiae (strain ATCC 204508 / S288c) (Baker's yeast).